The primary structure comprises 909 residues: MTKKNFNDEENESLLETYNKQQQKQSISTTNRSDQKFGINNANKQFSLNNKKSINGEEIDEEELIEDTIFFKFKLDSKQRNSIKLFIQIVSLVILAGYLISINALYFSTNARSIIFYPSINSNTTDSGSVSPTSTPSPTPTPTPSPTSLLLQTLTSTTTSYDSSEIEALNGGTFNMKYFFYFSTFDILLISYFISLFWLLLIFSDSFIYHTISYIITIIALIYNVIKSYFTITQILSINNNIITTSSSSNEIYNGSDSYLPNESPLFDSLKVREIIIVIVLVGIPLMVLFLVLHIITLQLSFKKYKRLSDKEKQFYNQSNEEKRLNKKVEVKHSNLKRLIQLSRPELPIILAAMVALVFSSLTSLAMPYFFGSIVQVVATTHSFNNLNSSTLALVVIFVIGSISTLVRSWLFYLAGQKFVARIRRNLFSSIVNQEIGYFDQCRTGELLSRLSSDSQVIQNSVTVNISMLFRYTIQIIGSVILLFITNWRLTLLMLGIVPVLAISTVVYGKKIKQLGKQFQDELAKSSTTGEEVISNIRTVRSFSKEQKFIDLYSKDINGSYLIGKSLAVATGVFSGIVFLVAQLAIVLIVYVGARQVLDGTLSTGDLTSFLLYTLSLAMSLAFISSLMTDFLKAIGSSDRIFEIFDRVPAINVSGGKQIQNPLGEIELKDVEFSYPTRPNNSVLKGLNLKLSKGTITALVGPSGGGKSTVIAMIERFYDPNSGSITFDGIDIKELDPVWYRGIIGYVSQEPVLFAGSIKDNITFGNDSATMDQIISAAEKANAHSFIEEFENGYDTIVGERGVRLSGGQKQRVAIARAMIQNPMILLLDEATSALDAESEYLVKQAIDEIMKDRTVIVIAHRLSTVINANTVVVINQGKIEEMGTHKELLNNTDGIYHNLVKRQLSSDD.

The tract at residues 1 to 36 (MTKKNFNDEENESLLETYNKQQQKQSISTTNRSDQK) is disordered. Polar residues predominate over residues 14-36 (LLETYNKQQQKQSISTTNRSDQK). The helical transmembrane segment at 85–105 (LFIQIVSLVILAGYLISINAL) threads the bilayer. Residues 125–134 (TDSGSVSPTS) are compositionally biased toward low complexity. The segment at 125-147 (TDSGSVSPTSTPSPTPTPTPSPT) is disordered. Over residues 135-145 (TPSPTPTPTPS) the composition is skewed to pro residues. Transmembrane regions (helical) follow at residues 182–202 (FSTF…LLLI), 206–226 (SFIY…YNVI), 275–295 (IIIV…VLHI), 347–367 (LPII…SLAM), 392–412 (LALV…SWLF), 480–500 (VILL…IVPV), 572–592 (GVFS…IVYV), and 607–627 (LTSF…ISSL). The 284-residue stretch at 350–633 (ILAAMVALVF…ISSLMTDFLK (284 aa)) folds into the ABC transmembrane type-1 domain. The ABC transporter domain maps to 666–902 (IELKDVEFSY…TDGIYHNLVK (237 aa)). Residue 701–708 (GPSGGGKS) coordinates ATP.

It belongs to the ABC transporter superfamily. ABCB family.

It localises to the membrane. The sequence is that of ABC transporter B family member 1 (abcB1) from Dictyostelium discoideum (Social amoeba).